The sequence spans 1040 residues: Multidrug resistance protein MdtB (1040 aa).

12 helical membrane-spanning segments follow: residues Leu-25–Ala-45, Leu-347–Ala-367, Ile-369–Leu-389, Leu-396–Ile-416, Ile-440–Phe-460, Phe-472–Pro-492, Trp-537–Ile-557, Leu-863–Val-883, Phe-888–Ala-908, Ile-910–Ile-930, Ile-968–Val-988, and Ile-998–Ile-1018.

The protein belongs to the resistance-nodulation-cell division (RND) (TC 2.A.6) family. MdtB subfamily. As to quaternary structure, part of a tripartite efflux system composed of MdtA, MdtB and MdtC. MdtB forms a heteromultimer with MdtC.

The protein localises to the cell inner membrane. In Salmonella newport (strain SL254), this protein is Multidrug resistance protein MdtB.